The chain runs to 359 residues: Cytoplasmic tRNA 2-thiolation protein 1 (359 aa).

Belongs to the TtcA family. CTU1/NCS6/ATPBD3 subfamily. As to quaternary structure, interacts with NCS2 and URM1. May act by forming a heterodimer with NCS2. Component of a large molecular weight complex of more than 250 kDa.

Its subcellular location is the cytoplasm. It is found in the mitochondrion. It participates in tRNA modification; 5-methoxycarbonylmethyl-2-thiouridine-tRNA biosynthesis. Its function is as follows. Plays a central role in 2-thiolation of mcm(5)S(2)U at tRNA wobble positions of tRNA(Lys), tRNA(Glu) and tRNA(Gln). Directly binds tRNAs and probably acts by catalyzing adenylation of tRNAs, an intermediate required for 2-thiolation. It is unclear whether it acts as a sulfurtransferase that transfers sulfur from thiocarboxylated URM1 onto the uridine of tRNAs at wobble position. Prior mcm(5) tRNA modification by the elongator complex is required for 2-thiolation. May also be involved in protein urmylation. May also be involved in protein urmylation and in invasive and pseudohyphal growth. The sequence is that of Cytoplasmic tRNA 2-thiolation protein 1 from Saccharomyces cerevisiae (strain ATCC 204508 / S288c) (Baker's yeast).